The following is a 780-amino-acid chain: ATP-dependent 6-phosphofructokinase, liver type (780 aa).

At Ala2 the chain carries N-acetylalanine. The interval 2–390 is N-terminal catalytic PFK domain 1; sequence AAVDLEKLRA…NWNIYKLLAH (389 aa). ATP contacts are provided by residues Gly25, 88–89, and 118–121; these read RC and GDGS. Asp119 provides a ligand contact to Mg(2+). Substrate-binding positions include 164-166, Arg201, 208-210, Glu264, Arg292, and 298-301; these read SID, MGR, and HVQR. Asp166 serves as the catalytic Proton acceptor. A Phosphoserine modification is found at Ser377. Positions 391–400 are interdomain linker; that stretch reads QKPPKEKSNF. The tract at residues 401 to 780 is C-terminal regulatory PFK domain 2; the sequence is SLAILNVGAP…RRTLSMDKGF (380 aa). Residues Arg470, 527–531, Arg565, 572–574, and Glu628 each bind beta-D-fructose 2,6-bisphosphate; these read TISNN and MGG. Residue Ser529 is glycosylated (O-linked (GlcNAc) serine). Position 640 is a phosphotyrosine (Tyr640). Residues Arg654, 660 to 663, and Arg734 contribute to the beta-D-fructose 2,6-bisphosphate site; that span reads HLQQ. Ser775 is modified (phosphoserine).

This sequence belongs to the phosphofructokinase type A (PFKA) family. ATP-dependent PFK group I subfamily. Eukaryotic two domain clade 'E' sub-subfamily. As to quaternary structure, homo- and heterotetramers. Phosphofructokinase (PFK) enzyme functions as a tetramer composed of different combinations of 3 types of subunits, called PFKM (where M stands for Muscle), PFKL (Liver) and PFKP (Platelet). The composition of the PFK tetramer differs according to the tissue type it is present in. In muscles, it is composed of 4 PFKM subunits (also called M4). In the liver, the predominant form is a tetramer of PFKL subunits (L4). In erythrocytes, both PFKM and PFKL subunits randomly tetramerize to form M4, L4 and other combinations (ML3, M2L2, M3L). The kinetic and regulatory properties of the tetrameric enzyme are dependent on the subunit composition, hence can vary across tissues. Mg(2+) is required as a cofactor. GlcNAcylation at Ser-529 by OGT decreases enzyme activity, leading to redirect glucose flux through the oxidative pentose phosphate pathway. Glycosylation is stimulated by both hypoxia and glucose deprivation.

It is found in the cytoplasm. The enzyme catalyses beta-D-fructose 6-phosphate + ATP = beta-D-fructose 1,6-bisphosphate + ADP + H(+). It functions in the pathway carbohydrate degradation; glycolysis; D-glyceraldehyde 3-phosphate and glycerone phosphate from D-glucose: step 3/4. With respect to regulation, allosterically activated by ADP, AMP, or fructose 2,6-bisphosphate, and allosterically inhibited by ATP or citrate. GlcNAcylation by OGT overcomes allosteric regulation. Catalyzes the phosphorylation of D-fructose 6-phosphate to fructose 1,6-bisphosphate by ATP, the first committing step of glycolysis. Negatively regulates the phagocyte oxidative burst in response to bacterial infection by controlling cellular NADPH biosynthesis and NADPH oxidase-derived reactive oxygen species. Upon macrophage activation, drives the metabolic switch toward glycolysis, thus preventing glucose turnover that produces NADPH via pentose phosphate pathway. The sequence is that of ATP-dependent 6-phosphofructokinase, liver type from Homo sapiens (Human).